The sequence spans 310 residues: DnaJ-like protein MG002 (310 aa).

Positions 1-66 (MNLYDLLELP…KEKYDSMLKV (66 aa)) constitute a J domain.

This is DnaJ-like protein MG002 from Mycoplasma genitalium (strain ATCC 33530 / DSM 19775 / NCTC 10195 / G37) (Mycoplasmoides genitalium).